The following is a 141-amino-acid chain: Nucleoside diphosphate kinase (141 aa).

Lys-11, Phe-59, Arg-87, Thr-93, Arg-104, and Asn-114 together coordinate ATP. His-117 serves as the catalytic Pros-phosphohistidine intermediate.

The protein belongs to the NDK family. Homotetramer. Mg(2+) is required as a cofactor.

The protein localises to the cytoplasm. The enzyme catalyses a 2'-deoxyribonucleoside 5'-diphosphate + ATP = a 2'-deoxyribonucleoside 5'-triphosphate + ADP. It carries out the reaction a ribonucleoside 5'-diphosphate + ATP = a ribonucleoside 5'-triphosphate + ADP. Its function is as follows. Major role in the synthesis of nucleoside triphosphates other than ATP. The ATP gamma phosphate is transferred to the NDP beta phosphate via a ping-pong mechanism, using a phosphorylated active-site intermediate. The protein is Nucleoside diphosphate kinase of Polynucleobacter asymbioticus (strain DSM 18221 / CIP 109841 / QLW-P1DMWA-1) (Polynucleobacter necessarius subsp. asymbioticus).